The sequence spans 389 residues: LL-diaminopimelate aminotransferase (389 aa).

2 residues coordinate substrate: Tyr16 and Gly41. Residues Tyr70, 104 to 105 (SK), Tyr129, Asn179, Tyr210, and 239 to 241 (SLS) contribute to the pyridoxal 5'-phosphate site. Residues Lys105, Tyr129, and Asn179 each contribute to the substrate site. Lys242 bears the N6-(pyridoxal phosphate)lysine mark. Residue Arg250 participates in pyridoxal 5'-phosphate binding. Arg369 is a binding site for substrate.

Belongs to the class-I pyridoxal-phosphate-dependent aminotransferase family. LL-diaminopimelate aminotransferase subfamily. Homodimer. The cofactor is pyridoxal 5'-phosphate.

It catalyses the reaction (2S,6S)-2,6-diaminopimelate + 2-oxoglutarate = (S)-2,3,4,5-tetrahydrodipicolinate + L-glutamate + H2O + H(+). It functions in the pathway amino-acid biosynthesis; L-lysine biosynthesis via DAP pathway; LL-2,6-diaminopimelate from (S)-tetrahydrodipicolinate (aminotransferase route): step 1/1. Its function is as follows. Involved in the synthesis of meso-diaminopimelate (m-DAP or DL-DAP), required for both lysine and peptidoglycan biosynthesis. Catalyzes the direct conversion of tetrahydrodipicolinate to LL-diaminopimelate. This chain is LL-diaminopimelate aminotransferase, found in Nitratidesulfovibrio vulgaris (strain DSM 19637 / Miyazaki F) (Desulfovibrio vulgaris).